The sequence spans 122 residues: Prefoldin subunit 1 (122 aa).

The residue at position 2 (alanine 2) is an N-acetylalanine.

Belongs to the prefoldin subunit beta family. In terms of assembly, heterohexamer of two PFD-alpha type and four PFD-beta type subunits.

Its function is as follows. Binds specifically to cytosolic chaperonin (c-CPN) and transfers target proteins to it. Binds to nascent polypeptide chain and promotes folding in an environment in which there are many competing pathways for nonnative proteins. This chain is Prefoldin subunit 1 (PFDN1), found in Bos taurus (Bovine).